We begin with the raw amino-acid sequence, 1414 residues long: Phenyloxazoline synthase MbtB (1414 aa).

Residues 5-78 (TACSEIIRAE…AWSQLVSAGT (74 aa)) enclose the Carrier 1 domain. The residue at position 39 (Ser-39) is an O-(pantetheine 4'-phosphoryl)serine. A condensation/cyclization region spans residues 96 to 394 (EGEPFPLAPM…SSLLLDVDLT (299 aa)). The segment at 579 to 975 (SYAQLRDQAS…RLPGVHAAAA (397 aa)) is adenylation. The Carrier 2 domain occupies 1057–1135 (APRTVLQRAL…ALAQLLTGRE (79 aa)). An O-(pantetheine 4'-phosphoryl)serine modification is found at Ser-1094. The tract at residues 1188–1413 (GAVLVFPHAG…AVARMVSADV (226 aa)) is thioesterase.

The protein belongs to the ATP-dependent AMP-binding enzyme family. MbtB subfamily. Pantetheine 4'-phosphate is required as a cofactor. Post-translationally, 4'-phosphopantetheine is transferred from CoA to a specific serine in each of the two carrier protein domains, leading to their activation from apo to holo forms.

The protein operates within siderophore biosynthesis; mycobactin biosynthesis. In terms of biological role, involved in the initial steps of the mycobactin biosynthetic pathway. Putatively couples activated salicylic acid with serine or threonine and cyclizes this precursor to the hydroxyphenyloxazoline ring system present in this class of siderophores. This chain is Phenyloxazoline synthase MbtB (mbtB), found in Mycobacterium bovis (strain ATCC BAA-935 / AF2122/97).